The chain runs to 672 residues: DNA ligase (672 aa).

NAD(+) is bound by residues 32 to 36, 81 to 82, and E113; these read DAEYD and SL. Residue K115 is the N6-AMP-lysine intermediate of the active site. Residues R136, E173, K290, and K314 each contribute to the NAD(+) site. Zn(2+) is bound by residues C408, C411, C426, and C432. The BRCT domain maps to 592–672; that stretch reads EIDSPFAGKT…EMIRLLGESS (81 aa).

The protein belongs to the NAD-dependent DNA ligase family. LigA subfamily. Mg(2+) serves as cofactor. Requires Mn(2+) as cofactor.

The catalysed reaction is NAD(+) + (deoxyribonucleotide)n-3'-hydroxyl + 5'-phospho-(deoxyribonucleotide)m = (deoxyribonucleotide)n+m + AMP + beta-nicotinamide D-nucleotide.. In terms of biological role, DNA ligase that catalyzes the formation of phosphodiester linkages between 5'-phosphoryl and 3'-hydroxyl groups in double-stranded DNA using NAD as a coenzyme and as the energy source for the reaction. It is essential for DNA replication and repair of damaged DNA. The sequence is that of DNA ligase from Yersinia enterocolitica serotype O:8 / biotype 1B (strain NCTC 13174 / 8081).